The chain runs to 103 residues: BLOC-1-related complex subunit 7 (103 aa).

This sequence belongs to the BORCS7 family.

The protein localises to the lysosome membrane. Functionally, as part of a BORC-like complex may play a role in lysosomes movement and localization at the cell periphery. Associated with the cytosolic face of lysosomes, this complex may couple lysosomes to microtubule plus-end-directed kinesin motor. The chain is BLOC-1-related complex subunit 7 from Danio rerio (Zebrafish).